A 136-amino-acid chain; its full sequence is Riboflavin kinase (136 aa).

15–20 (GLGEGR) is a CDP binding site. Residues Thr44 and Asn46 each coordinate Mg(2+). Residues Thr103 and Glu111 each coordinate FMN. 116–119 (YYLR) lines the CDP pocket.

Belongs to the archaeal riboflavin kinase family. The cofactor is Mg(2+).

It carries out the reaction riboflavin + CTP = CDP + FMN + H(+). It functions in the pathway cofactor biosynthesis; FMN biosynthesis; FMN from riboflavin (CTP route): step 1/1. Catalyzes the CTP-dependent phosphorylation of riboflavin (vitamin B2) to form flavin mononucleotide (FMN). The protein is Riboflavin kinase of Sulfurisphaera tokodaii (strain DSM 16993 / JCM 10545 / NBRC 100140 / 7) (Sulfolobus tokodaii).